The following is a 325-amino-acid chain: Glutarate 2-hydroxylase (325 aa).

Positions 160, 162, and 292 each coordinate Fe cation.

This sequence belongs to the glutarate hydroxylase family. In terms of assembly, homotetramer. Fe(2+) is required as a cofactor.

The catalysed reaction is glutarate + 2-oxoglutarate + O2 = (S)-2-hydroxyglutarate + succinate + CO2. It functions in the pathway amino-acid degradation. In terms of biological role, acts as an alpha-ketoglutarate-dependent dioxygenase catalyzing hydroxylation of glutarate (GA) to L-2-hydroxyglutarate (L2HG). Functions in a L-lysine degradation pathway that proceeds via cadaverine, glutarate and L-2-hydroxyglutarate. This Salmonella newport (strain SL254) protein is Glutarate 2-hydroxylase.